A 687-amino-acid chain; its full sequence is Transketolase 2 (687 aa).

A substrate-binding site is contributed by His-47. Residues His-87 and 135–137 (GPL) contribute to the thiamine diphosphate site. Residue Asp-176 coordinates Mg(2+). Thiamine diphosphate-binding residues include Gly-177 and Asn-206. Mg(2+)-binding residues include Asn-206 and Ile-208. Residues His-282, Arg-379, and Ser-406 each coordinate substrate. His-282 is a thiamine diphosphate binding site. Glu-432 serves as the catalytic Proton donor. Phe-458 lines the thiamine diphosphate pocket. Substrate contacts are provided by His-482, Asp-490, His-494, and Arg-541.

It belongs to the transketolase family. Requires Mg(2+) as cofactor. The cofactor is thiamine diphosphate.

It carries out the reaction D-sedoheptulose 7-phosphate + D-glyceraldehyde 3-phosphate = aldehydo-D-ribose 5-phosphate + D-xylulose 5-phosphate. Activity is increased sixfold following autotrophic growth on methanol compared with that of heterotrophically grown cells. Functionally, catalyzes the transfer of a two-carbon ketol group from a ketose donor to an aldose acceptor, via a covalent intermediate with the cofactor thiamine pyrophosphate. This chain is Transketolase 2, found in Xanthobacter flavus.